Consider the following 168-residue polypeptide: Small ribosomal subunit protein uS5 (168 aa).

Positions 17–80 (IEDQLVAVNR…EDGKKKMINV (64 aa)) constitute an S5 DRBM domain.

It belongs to the universal ribosomal protein uS5 family. Part of the 30S ribosomal subunit. Contacts proteins S4 and S8.

Functionally, with S4 and S12 plays an important role in translational accuracy. In terms of biological role, located at the back of the 30S subunit body where it stabilizes the conformation of the head with respect to the body. In Lactobacillus acidophilus (strain ATCC 700396 / NCK56 / N2 / NCFM), this protein is Small ribosomal subunit protein uS5.